Reading from the N-terminus, the 63-residue chain is Antimicrobial peptide 2 (63 aa).

An N-terminal signal peptide occupies residues 1-27; sequence MAKVPIAFLKFVIVLILFIAMSGMIEA. Disulfide bonds link cysteine 28-cysteine 45, cysteine 35-cysteine 49, and cysteine 44-cysteine 60.

The protein belongs to the AMP family. As to quaternary structure, homodimer. Seed specific.

It localises to the secreted. Possesses antifungal activity and is also active on two tested Gram-positive bacteria but is non-toxic for Gram-negative bacteria and cultured human cells. This chain is Antimicrobial peptide 2 (AMP2), found in Mirabilis jalapa (Garden four-o'clock).